The chain runs to 160 residues: Nucleotide-binding protein Bpet3698 (160 aa).

The protein belongs to the YajQ family.

Its function is as follows. Nucleotide-binding protein. This chain is Nucleotide-binding protein Bpet3698, found in Bordetella petrii (strain ATCC BAA-461 / DSM 12804 / CCUG 43448).